A 73-amino-acid chain; its full sequence is Omega-conotoxin CVID (73 aa).

The N-terminal stretch at 1–22 (MKLTCVVIVAVLLLTACQLITA) is a signal peptide. Positions 23 to 45 (DDSRGTQKHRALRSDTKLSMSTR) are excised as a propeptide. Disulfide bonds link C46-C61, C53-C65, and C60-C72. Position 72 is a cysteine amide (C72).

The protein belongs to the conotoxin O1 superfamily. In terms of tissue distribution, expressed by the venom duct.

Its subcellular location is the secreted. Functionally, omega-conotoxins act at presynaptic membranes, they bind and block voltage-gated calcium channels. This toxin inhibits neurotransmitter release, it blocks N-type calcium channels, probably a N-type (Cav2.2/CACNA1B) calcium channel variant. In Conus catus (Cat cone), this protein is Omega-conotoxin CVID.